Reading from the N-terminus, the 276-residue chain is Large ribosomal subunit protein uL2 (276 aa).

Positions 225–276 are disordered; it reads MNPNDHPHGGGEGRNPIGRNPVTPWGKPALGAKTRKKKHPSNRFIVKRRGKK. Over residues 257 to 276 the composition is skewed to basic residues; it reads KTRKKKHPSNRFIVKRRGKK.

This sequence belongs to the universal ribosomal protein uL2 family. In terms of assembly, part of the 50S ribosomal subunit. Forms a bridge to the 30S subunit in the 70S ribosome.

One of the primary rRNA binding proteins. Required for association of the 30S and 50S subunits to form the 70S ribosome, for tRNA binding and peptide bond formation. It has been suggested to have peptidyltransferase activity; this is somewhat controversial. Makes several contacts with the 16S rRNA in the 70S ribosome. The polypeptide is Large ribosomal subunit protein uL2 (Desulfitobacterium hafniense (strain Y51)).